We begin with the raw amino-acid sequence, 328 residues long: 6-phosphogluconolactonase (328 aa).

It belongs to the cycloisomerase 2 family.

It carries out the reaction 6-phospho-D-glucono-1,5-lactone + H2O = 6-phospho-D-gluconate + H(+). The protein operates within carbohydrate degradation; pentose phosphate pathway; D-ribulose 5-phosphate from D-glucose 6-phosphate (oxidative stage): step 2/3. Functionally, catalyzes the hydrolysis of 6-phosphogluconolactone to 6-phosphogluconate. The protein is 6-phosphogluconolactonase of Xenorhabdus nematophila (strain ATCC 19061 / DSM 3370 / CCUG 14189 / LMG 1036 / NCIMB 9965 / AN6).